The chain runs to 118 residues: MSEFAPICIYLVISPLVSLIPLGLPFLFSSNSSTYPEKSSAYECGLDPSGDARSRVDIRFYLVSILFIIPDPEVTFSFPWAVPPNKIDPFGSWSMMAFLLILTIGSLYEWKRGASDRE.

The next 2 helical transmembrane spans lie at 7–27 and 87–107; these read ICIYLVISPLVSLIPLGLPFL and IDPFGSWSMMAFLLILTIGSL.

It belongs to the complex I subunit 3 family.

It localises to the mitochondrion membrane. The enzyme catalyses a ubiquinone + NADH + 5 H(+)(in) = a ubiquinol + NAD(+) + 4 H(+)(out). In terms of biological role, core subunit of the mitochondrial membrane respiratory chain NADH dehydrogenase (Complex I) that is believed to belong to the minimal assembly required for catalysis. Complex I functions in the transfer of electrons from NADH to the respiratory chain. The immediate electron acceptor for the enzyme is believed to be ubiquinone. This chain is NADH-ubiquinone oxidoreductase chain 3 (ND3), found in Solanum tuberosum (Potato).